A 544-amino-acid polypeptide reads, in one-letter code: Homeobox protein B-H1 (544 aa).

The segment covering 53–70 (STTTMSSGGSTTTASGIG) has biased composition (low complexity). Disordered stretches follow at residues 53–73 (STTT…GKPN), 92–179 (YKQQ…PPTA), 236–308 (GGVG…AFTD), and 471–544 (AANP…QIQV). Positions 95–105 (QQHHQQLHHHN) are enriched in basic residues. Low complexity predominate over residues 106–131 (NNNNSGSSGGSSPAHSNNNNNINGDN). Positions 156-172 (THPHTHPHALMHPHGKL) are enriched in basic residues. Over residues 247–262 (DLDDSSDYHEENEDCD) the composition is skewed to acidic residues. The span at 266 to 282 (MDDHSVCSNGGKDDDGN) shows a compositional bias: basic and acidic residues. Polar residues predominate over residues 283 to 293 (SVKSGSTSDMS). Positions 299 to 358 (QRKARTAFTDHQLQTLEKSFERQKYLSVQERQELAHKLDLSDCQVKTWYQNRRTKWKRQT) form a DNA-binding region, homeobox. Residues 476 to 485 (GPHPVAPPPS) show a composition bias toward pro residues. Residues 492–506 (PSGLVKPIPAHSASA) show a composition bias toward low complexity. The span at 507–516 (SPPPRPPSTP) shows a compositional bias: pro residues.

Belongs to the Antp homeobox family. In terms of tissue distribution, B-H1 and B-H2 are abundant in the eye-antenna imaginal disk. Expressed in R1 and R6 cells throughout larval stage until 30 hours after puparium formation, at which time expression is seen in the anterior and posterior primary pigment cells. Coexpressed in embryonic glial cells, neurons of the CNS and PNS, most latitudinal anterior cells of the developing notum and the central circular region of the leg and antennal imaginal disk throughout larval development.

Its subcellular location is the nucleus. Functionally, B-H1 and B-H2 are regulated by members of the wg signaling pathway; wg and dpp. B-H1 and B-H2 are coexpressed and functionally required in R1 and R6 receptor cells and primary pigment cells for normal eye development. Coexpression is also required for the fate determination of external sensory organs, formation of notal microchaetae, formation of presutural macrochaetae, antennal development and for distal leg morphogenesis; segmentation and specification of tarsal segments 3-5. This Drosophila melanogaster (Fruit fly) protein is Homeobox protein B-H1 (B-H1).